Consider the following 100-residue polypeptide: UPF0213 protein YhbQ (100 aa).

The GIY-YIG domain maps to 2 to 77 (TPWFLYLIRT…KQLTKRQKER (76 aa)).

It belongs to the UPF0213 family.

This chain is UPF0213 protein YhbQ, found in Escherichia coli O7:K1 (strain IAI39 / ExPEC).